A 395-amino-acid chain; its full sequence is Putative 8-amino-7-oxononanoate synthase (395 aa).

Position 22 (Arg-22) interacts with substrate. A pyridoxal 5'-phosphate-binding site is contributed by Gly-109 to Tyr-110. His-139 is a binding site for substrate. Pyridoxal 5'-phosphate contacts are provided by residues Ser-187, Asp-212–His-215, and Thr-241–Lys-244. At Lys-244 the chain carries N6-(pyridoxal phosphate)lysine. Position 358 (Thr-358) interacts with substrate.

The protein belongs to the class-II pyridoxal-phosphate-dependent aminotransferase family. BioF subfamily. As to quaternary structure, homodimer. Requires pyridoxal 5'-phosphate as cofactor.

The catalysed reaction is 6-carboxyhexanoyl-[ACP] + L-alanine + H(+) = (8S)-8-amino-7-oxononanoate + holo-[ACP] + CO2. Its pathway is cofactor biosynthesis; biotin biosynthesis. Catalyzes the decarboxylative condensation of pimeloyl-[acyl-carrier protein] and L-alanine to produce 8-amino-7-oxononanoate (AON), [acyl-carrier protein], and carbon dioxide. The protein is Putative 8-amino-7-oxononanoate synthase (bioF) of Magnetococcus marinus (strain ATCC BAA-1437 / JCM 17883 / MC-1).